The sequence spans 1392 residues: DNA-directed RNA polymerase subunit beta'' (1392 aa).

C224, C295, C302, and C305 together coordinate Zn(2+).

The protein belongs to the RNA polymerase beta' chain family. RpoC2 subfamily. As to quaternary structure, in plastids the minimal PEP RNA polymerase catalytic core is composed of four subunits: alpha, beta, beta', and beta''. When a (nuclear-encoded) sigma factor is associated with the core the holoenzyme is formed, which can initiate transcription. The cofactor is Zn(2+).

The protein resides in the plastid. Its subcellular location is the chloroplast. It catalyses the reaction RNA(n) + a ribonucleoside 5'-triphosphate = RNA(n+1) + diphosphate. Its function is as follows. DNA-dependent RNA polymerase catalyzes the transcription of DNA into RNA using the four ribonucleoside triphosphates as substrates. This Solanum bulbocastanum (Wild potato) protein is DNA-directed RNA polymerase subunit beta''.